Consider the following 409-residue polypeptide: Inner membrane transport protein YqeG (409 aa).

The Periplasmic portion of the chain corresponds to 1–25 (MSNIWSKEETLWSFALYGTAVGAGT). A helical transmembrane segment spans residues 26 to 46 (LFLPIQLGSAGAVVLFITALV). Residues 47 to 87 (AWPLTYWPHKALCQFILSSKTSAGEGITGAVTHYYGKKIGN) are Cytoplasmic-facing. The helical transmembrane segment at 88–108 (LITTLYFIAFFVVVLIYAVAI) threads the bilayer. The Periplasmic portion of the chain corresponds to 109–127 (TNSLTEQLAKHMVIDLRIR). Residues 128–148 (MLVSLGVVLILNLIFLMGRHA) form a helical membrane-spanning segment. Residues 149-151 (TIR) lie on the Cytoplasmic side of the membrane. The helical transmembrane segment at 152-172 (VMGFLVFPLIAYFLFLSIYLV) threads the bilayer. The Periplasmic segment spans residues 173–193 (GSWQPDLLTTQVEFNQNTLHQ). A helical membrane pass occupies residues 194–214 (IWISIPVMVFAFSHTPIISTF). Topologically, residues 215–235 (AIDRREKYGEHAMDKCKKIMK) are cytoplasmic. The chain crosses the membrane as a helical span at residues 236–256 (VAYLIICISVLFFVFSCLLSI). Residues 257–276 (PPSYIEAAKEEGVTILSALS) lie on the Periplasmic side of the membrane. Residues 277-297 (MLPNAPAWLSISGIIVAVVAM) form a helical membrane-spanning segment. The Cytoplasmic segment spans residues 298-329 (SKSFLGTYFGVIEGATEVVKTTLQQVGVKKSR). Residues 330-350 (AFNRALSIMLVSLITFIVCCI) traverse the membrane as a helical segment. Over 351–353 (NPN) the chain is Periplasmic. The helical transmembrane segment at 354-374 (AISMIYAISGPLIAMILFIMP) threads the bilayer. Topologically, residues 375–388 (TLSTYLIPALKPWR) are cytoplasmic. Residues 389 to 409 (SIGNLITLIVGILCVSVMFFS) traverse the membrane as a helical segment.

Belongs to the amino acid/polyamine transporter 2 family. SdaC/TdcC subfamily.

The protein resides in the cell inner membrane. In Escherichia coli O6:H1 (strain CFT073 / ATCC 700928 / UPEC), this protein is Inner membrane transport protein YqeG (yqeG).